The primary structure comprises 243 residues: Ubiquinone/menaquinone biosynthesis C-methyltransferase UbiE (243 aa).

Residues Thr-69, Asp-90, and 116–117 (DA) each bind S-adenosyl-L-methionine.

This sequence belongs to the class I-like SAM-binding methyltransferase superfamily. MenG/UbiE family.

It catalyses the reaction a 2-demethylmenaquinol + S-adenosyl-L-methionine = a menaquinol + S-adenosyl-L-homocysteine + H(+). It carries out the reaction a 2-methoxy-6-(all-trans-polyprenyl)benzene-1,4-diol + S-adenosyl-L-methionine = a 5-methoxy-2-methyl-3-(all-trans-polyprenyl)benzene-1,4-diol + S-adenosyl-L-homocysteine + H(+). It functions in the pathway quinol/quinone metabolism; menaquinone biosynthesis; menaquinol from 1,4-dihydroxy-2-naphthoate: step 2/2. The protein operates within cofactor biosynthesis; ubiquinone biosynthesis. In terms of biological role, methyltransferase required for the conversion of demethylmenaquinol (DMKH2) to menaquinol (MKH2) and the conversion of 2-polyprenyl-6-methoxy-1,4-benzoquinol (DDMQH2) to 2-polyprenyl-3-methyl-6-methoxy-1,4-benzoquinol (DMQH2). The protein is Ubiquinone/menaquinone biosynthesis C-methyltransferase UbiE of Cupriavidus necator (strain ATCC 17699 / DSM 428 / KCTC 22496 / NCIMB 10442 / H16 / Stanier 337) (Ralstonia eutropha).